The following is a 223-amino-acid chain: Deoxyribose-phosphate aldolase (223 aa).

Asp-91 acts as the Proton donor/acceptor in catalysis. Lys-153 functions as the Schiff-base intermediate with acetaldehyde in the catalytic mechanism. Residue Lys-182 is the Proton donor/acceptor of the active site.

This sequence belongs to the DeoC/FbaB aldolase family. DeoC type 1 subfamily.

It localises to the cytoplasm. The enzyme catalyses 2-deoxy-D-ribose 5-phosphate = D-glyceraldehyde 3-phosphate + acetaldehyde. It functions in the pathway carbohydrate degradation; 2-deoxy-D-ribose 1-phosphate degradation; D-glyceraldehyde 3-phosphate and acetaldehyde from 2-deoxy-alpha-D-ribose 1-phosphate: step 2/2. Functionally, catalyzes a reversible aldol reaction between acetaldehyde and D-glyceraldehyde 3-phosphate to generate 2-deoxy-D-ribose 5-phosphate. In Streptococcus pyogenes serotype M2 (strain MGAS10270), this protein is Deoxyribose-phosphate aldolase.